A 188-amino-acid polypeptide reads, in one-letter code: GTP cyclohydrolase 1 (188 aa).

Zn(2+) is bound by residues Cys76, His79, and Cys148.

This sequence belongs to the GTP cyclohydrolase I family. As to quaternary structure, homomer.

It carries out the reaction GTP + H2O = 7,8-dihydroneopterin 3'-triphosphate + formate + H(+). The protein operates within cofactor biosynthesis; 7,8-dihydroneopterin triphosphate biosynthesis; 7,8-dihydroneopterin triphosphate from GTP: step 1/1. The polypeptide is GTP cyclohydrolase 1 (Thermoanaerobacter pseudethanolicus (strain ATCC 33223 / 39E) (Clostridium thermohydrosulfuricum)).